The following is a 344-amino-acid chain: uncharacterized protein (344 aa).

The next 8 membrane-spanning stretches (helical) occupy residues 25–45 (GAGWACGVTVVLPPPGTVGAV), 68–88 (FVDALLLAGGSAYGLAAADGV), 104–124 (GVVPIVPGAVIFDLPVGGWNC), 133–153 (SACAAAGVDVAVGTVGVGVGA), 161–181 (GVGTASATLQSGVTVGVLAVV), 224–244 (LGAFNTPFNTTIGVIACDAAL), 276–296 (VFALATGAVAVPPEAGVPAAL), and 302–322 (LVTAVGAAAADCLARAVLAGV).

It belongs to the peptidase S58 family.

The protein localises to the cell membrane. Its function is as follows. Aminopeptidase. This is an uncharacterized protein from Mycobacterium bovis (strain ATCC BAA-935 / AF2122/97).